Here is a 175-residue protein sequence, read N- to C-terminus: Large ribosomal subunit protein uL10 (175 aa).

It belongs to the universal ribosomal protein uL10 family. As to quaternary structure, part of the ribosomal stalk of the 50S ribosomal subunit. The N-terminus interacts with L11 and the large rRNA to form the base of the stalk. The C-terminus forms an elongated spine to which L12 dimers bind in a sequential fashion forming a multimeric L10(L12)X complex.

Its function is as follows. Forms part of the ribosomal stalk, playing a central role in the interaction of the ribosome with GTP-bound translation factors. This is Large ribosomal subunit protein uL10 from Methylobacterium nodulans (strain LMG 21967 / CNCM I-2342 / ORS 2060).